We begin with the raw amino-acid sequence, 195 residues long: dCTP deaminase (195 aa).

Residues 110 to 115 (RSSLAR), Asp-128, 136 to 138 (VLE), Tyr-171, Lys-178, and Gln-182 each bind dCTP. Glu-138 serves as the catalytic Proton donor/acceptor. Residues 171–195 (YSSRKDAKYKNQQSAVASRIDEDKE) form a disordered region.

The protein belongs to the dCTP deaminase family. As to quaternary structure, homotrimer.

It carries out the reaction dCTP + H2O + H(+) = dUTP + NH4(+). The protein operates within pyrimidine metabolism; dUMP biosynthesis; dUMP from dCTP (dUTP route): step 1/2. Its function is as follows. Catalyzes the deamination of dCTP to dUTP. The protein is dCTP deaminase of Haemophilus influenzae (strain ATCC 51907 / DSM 11121 / KW20 / Rd).